The chain runs to 396 residues: Tryptophan synthase beta chain (396 aa).

Lys88 is subject to N6-(pyridoxal phosphate)lysine.

It belongs to the TrpB family. In terms of assembly, tetramer of two alpha and two beta chains. Requires pyridoxal 5'-phosphate as cofactor.

It catalyses the reaction (1S,2R)-1-C-(indol-3-yl)glycerol 3-phosphate + L-serine = D-glyceraldehyde 3-phosphate + L-tryptophan + H2O. The protein operates within amino-acid biosynthesis; L-tryptophan biosynthesis; L-tryptophan from chorismate: step 5/5. Functionally, the beta subunit is responsible for the synthesis of L-tryptophan from indole and L-serine. The protein is Tryptophan synthase beta chain of Shewanella oneidensis (strain ATCC 700550 / JCM 31522 / CIP 106686 / LMG 19005 / NCIMB 14063 / MR-1).